The following is a 781-amino-acid chain: MNFNDIDNQMYGNLEEDAELLAELAAIQEEEMGRVSRPAAPARGAPPAARGRPAPAAPANVPGLDPRLLAAALADNHGDGGDEELEMDEDLLNELNGLVGGGGGGGAAPTVPTRAAPRAPGPSGPPPSASAPNSQLGHLKQLHVYYMKAHKSAEQAGEGPKARRYKRAVDKLVELIRAVERGKTIDESEIPVAPPNFSSAAAEPLPPPAPTAQPAHHPPAPPIRQAAHAAESSPPPIPQRKSSAPAPTAAAPPATKEPTDPKKAAIYRILHHRRDLHKQNARAAIADKDKESAKESVEMAKAFDQAIAALNECSADEMDMNDVPPSPPPYRKPAPPQPQAPPTSAGPLGFIEELQQRQQRFQKMAEKAKTEGNERKMKMNMRLAGQFDEAIKEAKRGKLVNVGELPSLPDMGPLPPQTAPGQAAPKLHQRPPPQEVGPLAPSGVEGKSRNQGQLEFLLERQAQFKQAAIHAKSRGDVEAAKKYLVEMKGFDKMIQAAQAGLPVSIKATPIPPQAQTASTTLQPRIQSAAASSSTGVENRGEKLSLLEKTLIEQVRSAETNQMRFTRLGDVGKVRLFEGWGKVAKQDLLLVREVAKRGLQVPKFHYEMRQIPSADLFPDLADDVIELTIVSCRDVPLPSGYETHHANLFIKYTFPAVVNDLPQTGKTKLIAGTASPDFGESIMLNIGSGKSRNSKLQRTFKRGGLKFEVFQKGGFMRSDKLLGTCEWKLEKLEHSAEMEESLPLKDGRKAVGGLLSAKVRIRQPIGDAKAQHIAQKWLILDN.

Disordered stretches follow at residues 32–63, 94–134, 187–296, 313–373, and 403–447; these read MGRV…NVPG, ELNG…APNS, ESEI…AKES, CSAD…TEGN, and GELP…VEGK. The segment covering 37–59 has biased composition (low complexity); it reads RPAAPARGAPPAARGRPAPAAPA. Residues 98 to 107 are compositionally biased toward gly residues; it reads LVGGGGGGGA. Positions 108–118 are enriched in low complexity; the sequence is APTVPTRAAPR. 2 stretches are compositionally biased toward pro residues: residues 119-129 and 204-222; these read APGPSGPPPSA and PLPP…PAPP. A compositionally biased stretch (low complexity) spans 244–256; that stretch reads APAPTAAAPPATK. Over residues 269–280 the composition is skewed to basic residues; it reads ILHHRRDLHKQN. The span at 285-296 shows a compositional bias: basic and acidic residues; sequence IADKDKESAKES. Pro residues predominate over residues 324 to 341; the sequence is PPSPPPYRKPAPPQPQAP. Over residues 363–373 the composition is skewed to basic and acidic residues; it reads KMAEKAKTEGN. Positions 605–741 constitute a C2 domain; sequence YEMRQIPSAD…EHSAEMEESL (137 aa).

The protein belongs to the CC2D1 family.

This chain is Coiled-coil and C2 domain-containing protein 1-like, found in Caenorhabditis elegans.